A 514-amino-acid chain; its full sequence is F-box-like/WD repeat-containing protein TBL1XR1 (514 aa).

An N-acetylserine modification is found at S2. In terms of domain architecture, LisH spans 4–36 (SSDEVNFLVYRYLQESGFSHSAFTFGIESHISQ). Residues 41–86 (GALVPPAALISIIQKGLQYVEAEVSINEDGTLFDGRPIESLSLIDA) enclose the F-box-like domain. K102 carries the post-translational modification N6-acetyllysine. A Phosphoserine modification is found at S119. The span at 120–135 (QQGSAKNGENTANGEE) shows a compositional bias: low complexity. Positions 120-139 (QQGSAKNGENTANGEENGAH) are disordered. WD repeat units follow at residues 167–206 (GHESEVFICAWNPVSDLLASGSGDSTARIWNLSENSTSGS), 223–262 (PSNKDVTSLDWNSEGTLLATGSYDGFARIWTKDGNLASTL), 264–303 (QHKGPIFALKWNKKGNFILSAGVDKTTIIWDAHTGEAKQQ), 306–344 (FHSAPALDVDWQSNNTFASCSTDMCIHVCKLGQDRPIKT), 347–386 (GHTNEVNAIKWDPTGNLLASCSDDMTLKIWSMKQDNCVHD), 389–437 (AHNK…CIHT), 440–479 (KHQEPVYSVAFSPDGRYLASGSFDKCVHIWNTQTGALVHS), and 481–513 (RGTGGIFEVCWNAAGDKVGASASDGSVCVLDLR). Residue K277 forms a Glycyl lysine isopeptide (Lys-Gly) (interchain with G-Cter in SUMO2) linkage.

This sequence belongs to the WD repeat EBI family. In terms of assembly, component of the N-Cor repressor complex, at least composed of NCOR1, NCOR2, HDAC3, TBL1X, TBL1XR1, CORO2A and GPS2. Probable component of some E3 ubiquitin ligase complex. Interacts with histones H2B and H4. Interacts with MECP2; bridges interaction between MECP2 and NCOR1. Interacts with USP44. Widely expressed including the pituitary, hypothalamus, white and brown adipose tissue, muscle and liver.

It is found in the nucleus. Functionally, F-box-like protein involved in the recruitment of the ubiquitin/19S proteasome complex to nuclear receptor-regulated transcription units. Plays an essential role in transcription activation mediated by nuclear receptors. Probably acts as integral component of the N-Cor corepressor complex that mediates the recruitment of the 19S proteasome complex, leading to the subsequent proteasomal degradation of N-Cor complex, thereby allowing cofactor exchange, and transcription activation. The protein is F-box-like/WD repeat-containing protein TBL1XR1 (TBL1XR1) of Homo sapiens (Human).